Here is a 1368-residue protein sequence, read N- to C-terminus: DNA-directed RNA polymerase subunit beta (1368 aa).

This sequence belongs to the RNA polymerase beta chain family. The RNAP catalytic core consists of 2 alpha, 1 beta, 1 beta' and 1 omega subunit. When a sigma factor is associated with the core the holoenzyme is formed, which can initiate transcription.

It catalyses the reaction RNA(n) + a ribonucleoside 5'-triphosphate = RNA(n+1) + diphosphate. In terms of biological role, DNA-dependent RNA polymerase catalyzes the transcription of DNA into RNA using the four ribonucleoside triphosphates as substrates. This Burkholderia mallei (strain SAVP1) protein is DNA-directed RNA polymerase subunit beta.